The primary structure comprises 119 residues: Phosphoribosyl-AMP cyclohydrolase (119 aa).

D71 is a Mg(2+) binding site. C72 lines the Zn(2+) pocket. Residues D73 and D75 each coordinate Mg(2+). Zn(2+) is bound by residues C90 and C97.

It belongs to the PRA-CH family. In terms of assembly, homodimer. Requires Mg(2+) as cofactor. Zn(2+) is required as a cofactor.

The protein resides in the cytoplasm. The catalysed reaction is 1-(5-phospho-beta-D-ribosyl)-5'-AMP + H2O = 1-(5-phospho-beta-D-ribosyl)-5-[(5-phospho-beta-D-ribosylamino)methylideneamino]imidazole-4-carboxamide. It functions in the pathway amino-acid biosynthesis; L-histidine biosynthesis; L-histidine from 5-phospho-alpha-D-ribose 1-diphosphate: step 3/9. In terms of biological role, catalyzes the hydrolysis of the adenine ring of phosphoribosyl-AMP. This is Phosphoribosyl-AMP cyclohydrolase from Brucella abortus (strain 2308).